A 234-amino-acid chain; its full sequence is Large ribosomal subunit protein uL1 (234 aa).

The protein belongs to the universal ribosomal protein uL1 family. As to quaternary structure, part of the 50S ribosomal subunit.

Binds directly to 23S rRNA. The L1 stalk is quite mobile in the ribosome, and is involved in E site tRNA release. In terms of biological role, protein L1 is also a translational repressor protein, it controls the translation of the L11 operon by binding to its mRNA. This Helicobacter acinonychis (strain Sheeba) protein is Large ribosomal subunit protein uL1.